A 465-amino-acid chain; its full sequence is Ribulose bisphosphate carboxylase large chain (465 aa).

K4 is subject to N6,N6,N6-trimethyllysine. Substrate is bound by residues N113 and T163. Residue K165 is the Proton acceptor of the active site. Position 167 (K167) interacts with substrate. 3 residues coordinate Mg(2+): K191, D193, and E194. K191 carries the N6-carboxylysine modification. H284 (proton acceptor) is an active-site residue. Residues R285, H317, and S369 each coordinate substrate.

Belongs to the RuBisCO large chain family. Type I subfamily. Heterohexadecamer of 8 large chains and 8 small chains; disulfide-linked. The disulfide link is formed within the large subunit homodimers. The cofactor is Mg(2+). The disulfide bond which can form in the large chain dimeric partners within the hexadecamer appears to be associated with oxidative stress and protein turnover.

The protein resides in the plastid. The protein localises to the chloroplast. The catalysed reaction is 2 (2R)-3-phosphoglycerate + 2 H(+) = D-ribulose 1,5-bisphosphate + CO2 + H2O. It catalyses the reaction D-ribulose 1,5-bisphosphate + O2 = 2-phosphoglycolate + (2R)-3-phosphoglycerate + 2 H(+). Its function is as follows. RuBisCO catalyzes two reactions: the carboxylation of D-ribulose 1,5-bisphosphate, the primary event in carbon dioxide fixation, as well as the oxidative fragmentation of the pentose substrate in the photorespiration process. Both reactions occur simultaneously and in competition at the same active site. The polypeptide is Ribulose bisphosphate carboxylase large chain (Nepenthes alata (Winged pitcher plant)).